We begin with the raw amino-acid sequence, 417 residues long: NADH-quinone oxidoreductase subunit D 1 (417 aa).

This sequence belongs to the complex I 49 kDa subunit family. NDH-1 is composed of 14 different subunits. Subunits NuoB, C, D, E, F, and G constitute the peripheral sector of the complex.

Its subcellular location is the cell membrane. It catalyses the reaction a quinone + NADH + 5 H(+)(in) = a quinol + NAD(+) + 4 H(+)(out). Its function is as follows. NDH-1 shuttles electrons from NADH, via FMN and iron-sulfur (Fe-S) centers, to quinones in the respiratory chain. The immediate electron acceptor for the enzyme in this species is believed to be ubiquinone. Couples the redox reaction to proton translocation (for every two electrons transferred, four hydrogen ions are translocated across the cytoplasmic membrane), and thus conserves the redox energy in a proton gradient. The sequence is that of NADH-quinone oxidoreductase subunit D 1 from Roseiflexus castenholzii (strain DSM 13941 / HLO8).